We begin with the raw amino-acid sequence, 2415 residues long: Spectrin alpha chain, erythrocytic 1 (2415 aa).

Spectrin repeat units follow at residues 52 to 152, 157 to 259, 263 to 365, 370 to 471, 475 to 576, 580 to 681, 686 to 787, 792 to 894, and 898 to 967; these read YHYQ…SDVL, KFYQ…ESLS, DLQR…AKLK, YHRF…HQYR, DFHL…RKLL, QLLQ…GTQL, QLLQ…KKKL, KLQQ…NDLK, and QLQQ…QQQQ. S257 is subject to Phosphoserine. The region spanning 975–1034 is the SH3 domain; it reads GREARVIALYDFEARSRREVSMKKNDVLTLLSSINKDWWKVEADDHQGFVPAVYVRKLAP. S990 carries the post-translational modification Phosphoserine. Spectrin repeat units follow at residues 1085–1177, 1183–1285, 1287–1390, 1394–1489, 1499–1603, 1606–1709, 1712–1815, 1818–1921, 1924–2029, 2040–2142, and 2154–2254; these read LAYE…YQLL, VEMF…SLNE, HKFF…KMLD, ELQL…QLLT, DLKQ…KLNE, RQQR…KLKE, ALFQ…NLEE, EYLQ…SQLD, HAFQ…KLLE, LFME…QELQ, and MCQE…NLEQ. S1972 is modified (phosphoserine). EF-hand domains lie at 2267–2302, 2310–2345, and 2347–2382; these read ETLK…LNYY, EPEP…KESE, and IKTS…EQVS. D2280, N2282, T2284, R2286, E2291, D2323, Y2329, and D2334 together coordinate Ca(2+).

This sequence belongs to the spectrin family. Composed of non-homologous chains, alpha and beta, which aggregate to form dimers, tetramers, and higher polymers. Interacts with FASLG. Interacts with BCAM.

The protein localises to the cytoplasm. It is found in the cytoskeleton. Its subcellular location is the cell cortex. In terms of biological role, spectrin is the major constituent of the cytoskeletal network underlying the erythrocyte plasma membrane. It associates with band 4.1 and actin to form the cytoskeletal superstructure of the erythrocyte plasma membrane. This Mus musculus (Mouse) protein is Spectrin alpha chain, erythrocytic 1 (Spta1).